Reading from the N-terminus, the 448-residue chain is Exodeoxyribonuclease 7 large subunit (448 aa).

This sequence belongs to the XseA family. In terms of assembly, heterooligomer composed of large and small subunits.

Its subcellular location is the cytoplasm. The enzyme catalyses Exonucleolytic cleavage in either 5'- to 3'- or 3'- to 5'-direction to yield nucleoside 5'-phosphates.. Its function is as follows. Bidirectionally degrades single-stranded DNA into large acid-insoluble oligonucleotides, which are then degraded further into small acid-soluble oligonucleotides. The protein is Exodeoxyribonuclease 7 large subunit of Enterococcus faecalis (strain ATCC 700802 / V583).